The primary structure comprises 40 residues: Dolichyl-diphosphooligosaccharide--protein glycosyltransferase subunit 4 (40 aa).

At 1 to 4 (MITD) the chain is on the lumenal side. The helical transmembrane segment at 5–25 (VQLAIFSNVLGVFLFLLVVAY) threads the bilayer. Topologically, residues 26 to 40 (HYINANTGKIGPKAK) are cytoplasmic.

It belongs to the OST4 family. In terms of assembly, component of the oligosaccharyltransferase (OST) complex.

The protein resides in the endoplasmic reticulum membrane. In terms of biological role, subunit of the oligosaccharyl transferase (OST) complex that catalyzes the initial transfer of a defined glycan (Glc(3)Man(9)GlcNAc(2) in eukaryotes) from the lipid carrier dolichol-pyrophosphate to an asparagine residue within an Asn-X-Ser/Thr consensus motif in nascent polypeptide chains, the first step in protein N-glycosylation. N-glycosylation occurs cotranslationally and the complex associates with the Sec61 complex at the channel-forming translocon complex that mediates protein translocation across the endoplasmic reticulum (ER). All subunits are required for a maximal enzyme activity. The polypeptide is Dolichyl-diphosphooligosaccharide--protein glycosyltransferase subunit 4 (Drosophila willistoni (Fruit fly)).